A 743-amino-acid polypeptide reads, in one-letter code: Catalase-peroxidase (743 aa).

Residues 1–15 (MSSDSRPPQPDTSTQ) are compositionally biased toward polar residues. Residues 1–40 (MSSDSRPPQPDTSTQSNSESESPAISSPTPQDHAPMTNRD) are disordered. Positions 16–28 (SNSESESPAISSP) are enriched in low complexity. Residues 110 to 233 (WHAAGTYRIQ…YGATTMGLIY (124 aa)) constitute a cross-link (tryptophyl-tyrosyl-methioninium (Trp-Tyr) (with M-259)). His-111 serves as the catalytic Proton acceptor. The segment at residues 233-259 (YVNPEGPEGKPDPVAAAHDIRETFARM) is a cross-link (tryptophyl-tyrosyl-methioninium (Tyr-Met) (with W-110)). His-274 serves as a coordination point for heme b. A disordered region spans residues 490–511 (DKRGGANGGRLRLEPQKSWESN).

This sequence belongs to the peroxidase family. Peroxidase/catalase subfamily. Homodimer or homotetramer. Heme b is required as a cofactor. In terms of processing, formation of the three residue Trp-Tyr-Met cross-link is important for the catalase, but not the peroxidase activity of the enzyme.

The catalysed reaction is H2O2 + AH2 = A + 2 H2O. It carries out the reaction 2 H2O2 = O2 + 2 H2O. Its function is as follows. Bifunctional enzyme with both catalase and broad-spectrum peroxidase activity. The sequence is that of Catalase-peroxidase from Mycobacterium ulcerans (strain Agy99).